The chain runs to 331 residues: Elongation factor Ts, mitochondrial (331 aa).

The interval 254–295 (SPLTVGEMPEVREEEGEKKDGDKQDEEERSTDSDEDETQMLR) is disordered. Over residues 262-275 (PEVREEEGEKKDGD) the composition is skewed to basic and acidic residues. Residues 276–291 (KQDEEERSTDSDEDET) are compositionally biased toward acidic residues.

This sequence belongs to the EF-Ts family.

It localises to the mitochondrion. Its function is as follows. Associates with the EF-Tu.GDP complex and induces the exchange of GDP to GTP. It remains bound to the aminoacyl-tRNA.EF-Tu.GTP complex up to the GTP hydrolysis stage on the ribosome. The protein is Elongation factor Ts, mitochondrial of Branchiostoma floridae (Florida lancelet).